Consider the following 459-residue polypeptide: Ribulose bisphosphate carboxylase (459 aa).

Asn111 provides a ligand contact to substrate. Residue Lys166 is the Proton acceptor of the active site. Residue Lys168 coordinates substrate. Residues Lys191, Asp193, and Glu194 each contribute to the Mg(2+) site. Lys191 bears the N6-carboxylysine mark. Residue His287 is the Proton acceptor of the active site. Residues Arg288, His321, and Ser368 each coordinate substrate.

This sequence belongs to the RuBisCO large chain family. Type II subfamily. In terms of assembly, homodimer. Mg(2+) serves as cofactor.

The enzyme catalyses 2 (2R)-3-phosphoglycerate + 2 H(+) = D-ribulose 1,5-bisphosphate + CO2 + H2O. It catalyses the reaction D-ribulose 1,5-bisphosphate + O2 = 2-phosphoglycolate + (2R)-3-phosphoglycerate + 2 H(+). RuBisCO catalyzes two reactions: the carboxylation of D-ribulose 1,5-bisphosphate, the primary event in carbon dioxide fixation, as well as the oxidative fragmentation of the pentose substrate. Both reactions occur simultaneously and in competition at the same active site. This chain is Ribulose bisphosphate carboxylase, found in Dechloromonas aromatica (strain RCB).